The sequence spans 313 residues: MGIKKKRQSKRLTTRKREGMLKRARANERKKRRMDRKMQAKVERIPPSVLRTDEENMQYAEIKRMAKLRKMEYDEALRNSEKKEAYLDGILRLVSKSDVVIEVIDARDPDSSRNSEAEKIVSEHGKKLIMVLNYTQYVPREVVDEWKVHLKRDGNDCIEVTEEDMRQIGKETRIGIFGNPGSGKNFVLRGISRILEEKPNSVVVSVPLSKVTLSSILRGCHGLMGIAFRDYIEAIVKRIDRGEVSLRHGIPEFSNAEELLESICDVHGIRDESRSVCYMKASERFLEDFLRHKILFWRRVYSDENDLSFAFCQ.

Over residues 1-14 (MGIKKKRQSKRLTT) the composition is skewed to basic residues. The disordered stretch occupies residues 1 to 41 (MGIKKKRQSKRLTTRKREGMLKRARANERKKRRMDRKMQAK). Residues 15–27 (RKREGMLKRARAN) are compositionally biased toward basic and acidic residues. GTP-binding positions include 95–98 (SKSD), 178–185 (GNPGSGKN), and 212–215 (TLSS).

The protein belongs to the MMR1/HSR1 GTP-binding protein family.

The protein resides in the nucleus. It is found in the nucleolus. Functionally, required for normal processing of ribosomal pre-rRNA. Required for cell proliferation. Binds GTP. The chain is Guanine nucleotide-binding protein-like 3-like protein from Encephalitozoon cuniculi (strain GB-M1) (Microsporidian parasite).